The chain runs to 896 residues: Translation initiation factor IF-2 (896 aa).

2 stretches are compositionally biased toward basic and acidic residues: residues 94 to 159 and 166 to 219; these read KRDP…KDKV and DMTK…EKNW. Positions 94-307 are disordered; the sequence is KRDPQEAERL…GSALQQGFQK (214 aa). The segment covering 256–271 has biased composition (basic residues); it reads GRGRNAKAARPAKKGN. The segment covering 272 to 285 has biased composition (basic and acidic residues); it reads KHAESKADREEARA. The tr-type G domain maps to 395–564; sequence PRAPVVTIMG…LLQAEVLELK (170 aa). The segment at 404–411 is G1; it reads GHVDHGKT. GTP is bound at residue 404 to 411; that stretch reads GHVDHGKT. Positions 429–433 are G2; sequence GITQH. The G3 stretch occupies residues 450 to 453; that stretch reads DTPG. GTP-binding positions include 450 to 454 and 504 to 507; these read DTPGH and NKID. The G4 stretch occupies residues 504–507; that stretch reads NKID. Residues 540–542 form a G5 region; the sequence is SAK.

It belongs to the TRAFAC class translation factor GTPase superfamily. Classic translation factor GTPase family. IF-2 subfamily.

It is found in the cytoplasm. Its function is as follows. One of the essential components for the initiation of protein synthesis. Protects formylmethionyl-tRNA from spontaneous hydrolysis and promotes its binding to the 30S ribosomal subunits. Also involved in the hydrolysis of GTP during the formation of the 70S ribosomal complex. The chain is Translation initiation factor IF-2 (infB) from Klebsiella oxytoca.